We begin with the raw amino-acid sequence, 274 residues long: Large ribosomal subunit protein uL2 (274 aa).

Residues 224-274 (VAMNPVDHPHGGGEGRTSGGRHPVTPWGIPTKGYKTRKNKRSNKLIVQKRK) are disordered. The segment covering 257 to 274 (YKTRKNKRSNKLIVQKRK) has biased composition (basic residues).

It belongs to the universal ribosomal protein uL2 family. In terms of assembly, part of the 50S ribosomal subunit. Forms a bridge to the 30S subunit in the 70S ribosome.

One of the primary rRNA binding proteins. Required for association of the 30S and 50S subunits to form the 70S ribosome, for tRNA binding and peptide bond formation. It has been suggested to have peptidyltransferase activity; this is somewhat controversial. Makes several contacts with the 16S rRNA in the 70S ribosome. The polypeptide is Large ribosomal subunit protein uL2 (Francisella philomiragia subsp. philomiragia (strain ATCC 25017 / CCUG 19701 / FSC 153 / O#319-036)).